The following is a 101-amino-acid chain: Small ribosomal subunit protein uS14 (101 aa).

The interval 51 to 72 is disordered; it reads LPRDSSPSRQRNPCRQTGRPHG. Over residues 52 to 65 the composition is skewed to polar residues; that stretch reads PRDSSPSRQRNPCR.

The protein belongs to the universal ribosomal protein uS14 family. As to quaternary structure, part of the 30S ribosomal subunit. Contacts proteins S3 and S10.

Its function is as follows. Binds 16S rRNA, required for the assembly of 30S particles and may also be responsible for determining the conformation of the 16S rRNA at the A site. The protein is Small ribosomal subunit protein uS14 of Buchnera aphidicola subsp. Acyrthosiphon kondoi (Acyrthosiphon kondoi symbiotic bacterium).